A 1412-amino-acid chain; its full sequence is ABC transporter C family member 3 (1412 aa).

A disordered region spans residues 1–34; sequence MELEEVGVEANQPNNDQGSKKQNKNKDKKVKKEK. Residues 21–34 show a composition bias toward basic residues; that stretch reads KQNKNKDKKVKKEK. 6 helical membrane passes run 115-135, 161-181, 236-256, 261-281, 346-366, and 379-399; these read FGLYFVLSWFFYAIYAASQFV, MGYYYALIMFGSAMIGSVCLY, VFQLVNNGVFALPQIIVCLAL, IGWPTFVGLGLMLAAVPFNGI, AMLIVIVAALPTAVSVLVFSS, and IFAALSYLNILRLPLGFLPII. The ABC transmembrane type-1 1 domain maps to 119-405; sequence FVLSWFFYAI…LPIIVALGIQ (287 aa). The region spanning 439–662 is the ABC transporter 1 domain; sequence IRDATLTWNQ…QKEFSGLLQA (224 aa). 474–481 is an ATP binding site; the sequence is GSVGSGKS. Transmembrane regions (helical) follow at residues 724-744, 787-807, 854-874, 875-895, and 967-987; these read WKYITVGGGFLFLMAFIFFLM, IYIGVGMTSILISAGRNFLFF, NLMATSISQFLVFFTTVVATL, IIISIITPFLLVPLAPICIIF, and WLGLRLDLLANLVTFFACLFI. The 291-residue stretch at 735-1025 folds into the ABC transmembrane type-1 2 domain; sequence FLMAFIFFLM…ATLQAADTET (291 aa). The ABC transporter 2 domain maps to 1062 to 1296; it reads ITFDNLVMRY…PAGLLNWLVE (235 aa). Residue 1096–1103 participates in ATP binding; it reads GRTGAGKS. The disordered stretch occupies residues 1316 to 1412; that stretch reads GVNIDQITPP…DNDNSEAGDN (97 aa). Residues 1342–1351 show a composition bias toward polar residues; sequence NINSPPQQSL. A compositionally biased stretch (low complexity) spans 1367–1397; the sequence is DNNNNNNNNNNNNNNNNNNNNNNNNNNNNND. Positions 1398-1412 are enriched in acidic residues; the sequence is NDNDNDNDNSEAGDN.

Belongs to the ABC transporter superfamily. ABCC family. Conjugate transporter (TC 3.A.1.208) subfamily.

Its subcellular location is the membrane. The sequence is that of ABC transporter C family member 3 (abcC3) from Dictyostelium discoideum (Social amoeba).